The following is a 91-amino-acid chain: Small ribosomal subunit protein uS19 (91 aa).

The protein belongs to the universal ribosomal protein uS19 family.

Functionally, protein S19 forms a complex with S13 that binds strongly to the 16S ribosomal RNA. The protein is Small ribosomal subunit protein uS19 of Psychrobacter arcticus (strain DSM 17307 / VKM B-2377 / 273-4).